A 620-amino-acid chain; its full sequence is Chaperone protein HscA homolog (620 aa).

It belongs to the heat shock protein 70 family.

Its function is as follows. Chaperone involved in the maturation of iron-sulfur cluster-containing proteins. Has a low intrinsic ATPase activity which is markedly stimulated by HscB. This is Chaperone protein HscA homolog from Shewanella sp. (strain ANA-3).